The sequence spans 215 residues: CUE domain-containing protein 4, mitochondrial (215 aa).

The transit peptide at 1–29 directs the protein to the mitochondrion; it reads MQPEQLAGCAVVLTVTVLTLRWMFRVDKG. In terms of domain architecture, CUE spans 48 to 90; sequence VNSEHVHLVKTVFPHLESSAIAYDLQKTKNVDATIENALRGQP. Residues 109–191 are disordered; the sequence is GAGASSHSEE…KEREELFRKR (83 aa). Low complexity-rich tracts occupy residues 122 to 140 and 153 to 165; these read SHEV…SLAS and SSRI…SSSS. Over residues 180-191 the composition is skewed to basic and acidic residues; sequence SKKEREELFRKR.

Its subcellular location is the mitochondrion. This is CUE domain-containing protein 4, mitochondrial from Schizosaccharomyces pombe (strain 972 / ATCC 24843) (Fission yeast).